The following is a 457-amino-acid chain: MDHLPIFCQLRDRDCLIVGGGDVAERKARLLLDAGARLTVNALAFIPQFTAWADAGMLTLVEGPFDESLLDTCWLAIAATDDDALNQRVSEAAESRRIFCNVVDAPKAASFIMPSIIDRSPLMVAVSSGGTSPVLARLLREKLESLLPLHLGQVAKYAGQLRGRVKQQFATMGERRRFWEKLFVNDRLAQSLANNDQKAITETTEQLINEPLDHRGEVVLVGAGPGDAGLLTLKGLQQIQQADVVVYDRLVSDDIMNLVRRDADRVFVGKRAGYHCVPQEEINQILLREAQKGKRVVRLKGGDPFIFGRGGEELETLCNAGIPFSVVPGITAASGCSAYSGIPLTHRDYAQSVRLITGHLKTGGELDWENLAAEKQTLVFYMGLNQAATIQQKLIEHGMPGEMPVAIVENGTAVTQRVIDGTLTQLGELAQQMNSPSLIIIGRVVGLRDKLNWFSNH.

The tract at residues 1 to 204 (MDHLPIFCQL…NDQKAITETT (204 aa)) is precorrin-2 dehydrogenase /sirohydrochlorin ferrochelatase. NAD(+)-binding positions include 22 to 23 (DV) and 43 to 44 (LA). Ser128 carries the phosphoserine modification. A uroporphyrinogen-III C-methyltransferase region spans residues 216 to 457 (GEVVLVGAGP…RDKLNWFSNH (242 aa)). Pro225 provides a ligand contact to S-adenosyl-L-methionine. Catalysis depends on Asp248, which acts as the Proton acceptor. Residue Lys270 is the Proton donor of the active site. S-adenosyl-L-methionine is bound by residues 301-303 (GGD), Ile306, 331-332 (TA), Met382, and Gly411.

It in the N-terminal section; belongs to the precorrin-2 dehydrogenase / sirohydrochlorin ferrochelatase family. In the C-terminal section; belongs to the precorrin methyltransferase family.

The enzyme catalyses uroporphyrinogen III + 2 S-adenosyl-L-methionine = precorrin-2 + 2 S-adenosyl-L-homocysteine + H(+). The catalysed reaction is precorrin-2 + NAD(+) = sirohydrochlorin + NADH + 2 H(+). It catalyses the reaction siroheme + 2 H(+) = sirohydrochlorin + Fe(2+). It functions in the pathway cofactor biosynthesis; adenosylcobalamin biosynthesis; precorrin-2 from uroporphyrinogen III: step 1/1. It participates in cofactor biosynthesis; adenosylcobalamin biosynthesis; sirohydrochlorin from precorrin-2: step 1/1. The protein operates within porphyrin-containing compound metabolism; siroheme biosynthesis; precorrin-2 from uroporphyrinogen III: step 1/1. Its pathway is porphyrin-containing compound metabolism; siroheme biosynthesis; siroheme from sirohydrochlorin: step 1/1. It functions in the pathway porphyrin-containing compound metabolism; siroheme biosynthesis; sirohydrochlorin from precorrin-2: step 1/1. In terms of biological role, multifunctional enzyme that catalyzes the SAM-dependent methylations of uroporphyrinogen III at position C-2 and C-7 to form precorrin-2 via precorrin-1. Then it catalyzes the NAD-dependent ring dehydrogenation of precorrin-2 to yield sirohydrochlorin. Finally, it catalyzes the ferrochelation of sirohydrochlorin to yield siroheme. This Escherichia coli O7:K1 (strain IAI39 / ExPEC) protein is Siroheme synthase.